Here is a 282-residue protein sequence, read N- to C-terminus: Nucleotide-binding protein ABO_0549 (282 aa).

Residue 8–15 (GRSGSGKT) coordinates ATP. 59–62 (DARN) serves as a coordination point for GTP.

This sequence belongs to the RapZ-like family.

In terms of biological role, displays ATPase and GTPase activities. In Alcanivorax borkumensis (strain ATCC 700651 / DSM 11573 / NCIMB 13689 / SK2), this protein is Nucleotide-binding protein ABO_0549.